The sequence spans 203 residues: UDP-N-acetylglucosamine transferase subunit ALG13 (203 aa).

Belongs to the glycosyltransferase 28 family. In terms of assembly, heterodimer with ALG14 to form a functional enzyme.

It localises to the endoplasmic reticulum. The enzyme catalyses an N-acetyl-alpha-D-glucosaminyl-diphospho-di-trans,poly-cis-dolichol + UDP-N-acetyl-alpha-D-glucosamine = an N,N'-diacetylchitobiosyl-diphospho-di-trans,poly-cis-dolichol + UDP + H(+). Involved in protein N-glycosylation. Essential for the second step of the dolichol-linked oligosaccharide pathway. This Eremothecium gossypii (strain ATCC 10895 / CBS 109.51 / FGSC 9923 / NRRL Y-1056) (Yeast) protein is UDP-N-acetylglucosamine transferase subunit ALG13 (ALG13).